The sequence spans 520 residues: MSYTKKTSYSVKSSSSGSVPRSFSSMSYSGPSVTRQSYSVRTSYGGANRGMGAGMGGGGFISSSSAYGLGMGMGSGVVAPIQAVTFNKSLLAPLNLEIDPNIQVVRTQEKEQMKSLNNRFASFIDKVRFLEQQNKMLETKWSLLQNQTATRSNIDAMFEAYINNLRRQLDSLGNDKMKLEADLHNMQGLVEDFKNKYEDEINKRTECENDFVLIKKDVDEAYMNKVELEAKLESLSDEINFLRQIFEEEIRELQSQIKDTSVVVEMDNSRNLDMDAIVAEVRAQYEDIANRSRAEAEMWYKSKYEEMQTSATKYGDDLRSTKTEIADLNRMIQRLQSEIDAVKGQRSNLENQIAEAEERGELAVRDAKARIKDLEDALQRAKQDMARQIREYQELMNVKLALDIEIATYRKLLEGEEDRLLSGIKSVNISKQSTSYGSYPMESASSGYSNYSSGYGGGYGGGYSSGGGYSSGGGYSSGGGYSSGSGYSETVSQTKKSVVIKMIETKDGRVVSESSEVVQD.

Residues 1 to 27 are compositionally biased toward low complexity; it reads MSYTKKTSYSVKSSSSGSVPRSFSSMS. Residues 1 to 33 are disordered; sequence MSYTKKTSYSVKSSSSGSVPRSFSSMSYSGPSV. Residues 1 to 108 form a head region; sequence MSYTKKTSYS…DPNIQVVRTQ (108 aa). The interval 109–144 is coil 1A; it reads EKEQMKSLNNRFASFIDKVRFLEQQNKMLETKWSLL. One can recognise an IF rod domain in the interval 109–420; sequence EKEQMKSLNN…KLLEGEEDRL (312 aa). Residues 145–157 are linker 1; it reads QNQTATRSNIDAM. Residues 158-253 are coil 1B; it reads FEAYINNLRR…QIFEEEIREL (96 aa). The interval 254–273 is linker 12; that stretch reads QSQIKDTSVVVEMDNSRNLD. Positions 274–420 are coil 2; that stretch reads MDAIVAEVRA…KLLEGEEDRL (147 aa). Residues 421–520 form a tail region; it reads LSGIKSVNIS…VSESSEVVQD (100 aa).

Belongs to the intermediate filament family.

One of the non-neuronal predominant intermediate filament proteins of the visual pathway. The protein is Intermediate filament protein ON3 of Carassius auratus (Goldfish).